Consider the following 494-residue polypeptide: Glycerol kinase (494 aa).

Position 12 (threonine 12) interacts with ADP. Residues threonine 12, threonine 13, and serine 14 each contribute to the ATP site. Threonine 12 serves as a coordination point for sn-glycerol 3-phosphate. Arginine 16 contributes to the ADP binding site. Positions 82, 83, 135, and 244 each coordinate sn-glycerol 3-phosphate. Residues arginine 82, glutamate 83, tyrosine 135, aspartate 244, and glutamine 245 each coordinate glycerol. ADP-binding residues include threonine 266 and glycine 309. 4 residues coordinate ATP: threonine 266, glycine 309, glutamine 313, and glycine 409. Glycine 409 and asparagine 413 together coordinate ADP.

This sequence belongs to the FGGY kinase family.

The catalysed reaction is glycerol + ATP = sn-glycerol 3-phosphate + ADP + H(+). It participates in polyol metabolism; glycerol degradation via glycerol kinase pathway; sn-glycerol 3-phosphate from glycerol: step 1/1. Inhibited by fructose 1,6-bisphosphate (FBP). Its function is as follows. Key enzyme in the regulation of glycerol uptake and metabolism. Catalyzes the phosphorylation of glycerol to yield sn-glycerol 3-phosphate. This chain is Glycerol kinase, found in Alteromonas mediterranea (strain DSM 17117 / CIP 110805 / LMG 28347 / Deep ecotype).